The primary structure comprises 80 residues: Progonadoliberin-1 (80 aa).

The N-terminal stretch at 1-21 is a signal peptide; it reads MGIKRALWWMVVCVVVLQVSA. Gln22 carries the pyrrolidone carboxylic acid modification. At Gly31 the chain carries Glycine amide.

It belongs to the GnRH family.

Its subcellular location is the secreted. Functionally, stimulates the secretion of gonadotropins. The chain is Progonadoliberin-1 (gnrh1) from Clarias gariepinus (North African catfish).